The primary structure comprises 129 residues: Small ribosomal subunit protein uS11 (129 aa).

This sequence belongs to the universal ribosomal protein uS11 family. Part of the 30S ribosomal subunit. Interacts with proteins S7 and S18. Binds to IF-3.

In terms of biological role, located on the platform of the 30S subunit, it bridges several disparate RNA helices of the 16S rRNA. Forms part of the Shine-Dalgarno cleft in the 70S ribosome. This Caulobacter vibrioides (strain ATCC 19089 / CIP 103742 / CB 15) (Caulobacter crescentus) protein is Small ribosomal subunit protein uS11.